Consider the following 1803-residue polypeptide: Pyruvate dehydrogenase [NADP(+)], mitochondrial (1803 aa).

A mitochondrion-targeting transit peptide spans 1–37 (MKQSVRPIISNVLRKEVALYSTIIGQDKGKEPTGRTY). 4Fe-4S ferredoxin-type domains follow at residues 747-776 (FIPQ…PFVL) and 802-831 (FRIQ…MTDA). Cys-756, Cys-759, Cys-762, Cys-766, Cys-811, Cys-814, Cys-817, and Cys-821 together coordinate [4Fe-4S] cluster. In terms of domain architecture, Flavodoxin-like spans 1248 to 1391 (VTILYGSETG…GFNNWIPSVW (144 aa)). The FAD-binding FR-type domain maps to 1425-1650 (KSTPVLSITG…IHPTAMEFPD (226 aa)). FAD contacts are provided by residues 1458-1469 (YQVGDSLGVFPE) and 1585-1595 (IKPRYYSISSA).

This sequence in the N-terminal section; belongs to the pyruvate:ferredoxin/flavodoxin oxidoreductase family. In terms of assembly, homodimer. It depends on FAD as a cofactor. FMN serves as cofactor. Thiamine diphosphate is required as a cofactor. The cofactor is iron-sulfur cluster.

Its subcellular location is the mitochondrion. The catalysed reaction is pyruvate + NADP(+) + CoA = acetyl-CoA + CO2 + NADPH. Functionally, pyruvate dehydrogenase [NADP(+)] is one of three enzymes participating in respiratory metabolism. The enzyme is also active with 2-oxobutyrate and oxaloacetate. The enzyme is oxygen sensitive. The chain is Pyruvate dehydrogenase [NADP(+)], mitochondrial (PNO) from Euglena gracilis.